Here is a 1136-residue protein sequence, read N- to C-terminus: Coiled-coil domain-containing protein 136 (1136 aa).

The interval 1–46 (MQAMDGEVLLPALYEEEEEEEEEEEEVEEEQVEKGGSLGSLSMGKH) is disordered. Over residues 14-31 (YEEEEEEEEEEEEVEEEQ) the composition is skewed to acidic residues. Ser50 is subject to Phosphoserine. 2 coiled-coil regions span residues 293-631 (VMQL…QNQE) and 681-730 (LQAL…QTQS). Disordered stretches follow at residues 741–773 (GKNSGSRAPSTENFHRSYESSIDENEGYQKSYV), 814–837 (GSVSSGETLHRSYASSSTDEDPAE), 965–990 (NRPSISSEARGKNVNKNMNKNANGVR), and 1040–1111 (KKER…PDPP). Polar residues predominate over residues 743–752 (NSGSRAPSTE). Positions 839-972 (EDLEHFEETV…KENRPSISSE (134 aa)) form a coiled coil. The span at 976 to 989 (KNVNKNMNKNANGV) shows a compositional bias: low complexity. The stretch at 1017 to 1057 (YYKASQRRLDELMKEEKEIEEARKKEREKKAKKDLCKLATN) forms a coiled coil. Residues 1040-1052 (KKEREKKAKKDLC) are compositionally biased toward basic and acidic residues. Positions 1067–1091 (EPTEDEEENFEEYREGEDESCEAAE) are enriched in acidic residues. Residues 1112 to 1132 (IFSLPLVGLVVISALLWCWWA) traverse the membrane as a helical segment.

As to expression, present at high level in testis (at protein level).

It localises to the cytoplasmic vesicle. Its subcellular location is the secretory vesicle. The protein localises to the acrosome membrane. May play a role in acrosome formation in spermatogenesis and in fertilization. This Mus musculus (Mouse) protein is Coiled-coil domain-containing protein 136 (Ccdc136).